The chain runs to 321 residues: Phosphatidylglycerol phospholipase C (321 aa).

In terms of domain architecture, GP-PDE spans 2 to 251 (VEIVGHRAFK…DDPIKARKLC (250 aa)). A helical; Anchor for type IV membrane protein transmembrane segment spans residues 297–315 (WVHIKLCGWSIAYVIFLFL).

The protein belongs to the glycerophosphoryl diester phosphodiesterase family.

The protein resides in the mitochondrion membrane. Its subcellular location is the lipid droplet. The catalysed reaction is a 1,2-diacyl-sn-glycero-3-phospho-(1'-sn-glycerol) + H2O = sn-glycerol 3-phosphate + a 1,2-diacyl-sn-glycerol + H(+). Its function is as follows. Phosphatidylglycerol phospholipase required for the removal of excess phosphatidylglycerol (PG) via a phospholipase C-type degradation mechanism. In Saccharomyces cerevisiae (strain ATCC 204508 / S288c) (Baker's yeast), this protein is Phosphatidylglycerol phospholipase C (PGC1).